Here is a 234-residue protein sequence, read N- to C-terminus: Probable septum site-determining protein MinC (234 aa).

It belongs to the MinC family. In terms of assembly, interacts with MinD and FtsZ.

Its function is as follows. Cell division inhibitor that blocks the formation of polar Z ring septums. Rapidly oscillates between the poles of the cell to destabilize FtsZ filaments that have formed before they mature into polar Z rings. Prevents FtsZ polymerization. In Buchnera aphidicola subsp. Baizongia pistaciae (strain Bp), this protein is Probable septum site-determining protein MinC.